The chain runs to 215 residues: MVSLEARVREVKGKREARRLRRRGEVPAVVYGPATEPIPVKIKRSVLEKIFHTISEATPIQLIIKDDQGNTVAEKTVFLKMVQRDKVSETVVHLDFYEPTKGHRMRINVPLKVVGKPVGVEKGGFLEVFHEEIPVETDPDKVPQEIEVDVSSLDLGDVIHARDLKLPEGVKCLLEEEEAVVSVLVPKEVAIEEATEEEEEAAEPEVIKRKEEEEE.

Residues 192-203 (EEATEEEEEAAE) are compositionally biased toward acidic residues. The segment at 192–215 (EEATEEEEEAAEPEVIKRKEEEEE) is disordered. A compositionally biased stretch (basic and acidic residues) spans 205-215 (EVIKRKEEEEE).

This sequence belongs to the bacterial ribosomal protein bL25 family. CTC subfamily. Part of the 50S ribosomal subunit; part of the 5S rRNA/L5/L18/L25 subcomplex. Contacts the 5S rRNA. Binds to the 5S rRNA independently of L5 and L18.

Functionally, this is one of the proteins that binds to the 5S RNA in the ribosome where it forms part of the central protuberance. This chain is Large ribosomal subunit protein bL25, found in Thermotoga maritima (strain ATCC 43589 / DSM 3109 / JCM 10099 / NBRC 100826 / MSB8).